Reading from the N-terminus, the 220-residue chain is Guanylate kinase (220 aa).

The 180-residue stretch at 15 to 194 (GLMLVISSPS…AFDAVQSIVK (180 aa)) folds into the Guanylate kinase-like domain. 22–29 (SPSGAGKS) serves as a coordination point for ATP.

The protein belongs to the guanylate kinase family.

The protein resides in the cytoplasm. It catalyses the reaction GMP + ATP = GDP + ADP. Essential for recycling GMP and indirectly, cGMP. This Rhizobium etli (strain ATCC 51251 / DSM 11541 / JCM 21823 / NBRC 15573 / CFN 42) protein is Guanylate kinase.